We begin with the raw amino-acid sequence, 299 residues long: Oxygen-dependent coproporphyrinogen-III oxidase (299 aa).

A substrate-binding site is contributed by Ser92. Mn(2+)-binding residues include His96 and His106. The Proton donor role is filled by His106. Position 108–110 (108–110 (NVR)) interacts with substrate. Mn(2+)-binding residues include His145 and His175. The important for dimerization stretch occupies residues 240 to 275 (YVEFNLVWDRGTLFGLQTGGRTESILMSMPPLVRWE). Residue 258-260 (GGR) participates in substrate binding.

The protein belongs to the aerobic coproporphyrinogen-III oxidase family. As to quaternary structure, homodimer. It depends on Mn(2+) as a cofactor.

The protein resides in the cytoplasm. The enzyme catalyses coproporphyrinogen III + O2 + 2 H(+) = protoporphyrinogen IX + 2 CO2 + 2 H2O. Its pathway is porphyrin-containing compound metabolism; protoporphyrin-IX biosynthesis; protoporphyrinogen-IX from coproporphyrinogen-III (O2 route): step 1/1. Functionally, involved in the heme biosynthesis. Catalyzes the aerobic oxidative decarboxylation of propionate groups of rings A and B of coproporphyrinogen-III to yield the vinyl groups in protoporphyrinogen-IX. This chain is Oxygen-dependent coproporphyrinogen-III oxidase, found in Escherichia fergusonii (strain ATCC 35469 / DSM 13698 / CCUG 18766 / IAM 14443 / JCM 21226 / LMG 7866 / NBRC 102419 / NCTC 12128 / CDC 0568-73).